Reading from the N-terminus, the 220-residue chain is ATP synthase subunit 5, mitochondrial (220 aa).

This sequence belongs to the ATPase delta chain family. As to quaternary structure, F-type ATPases have 2 components, CF(1) - the catalytic core - and CF(0) - the membrane proton channel. CF(1) has five subunits: alpha(3), beta(3), gamma(1), delta(1), epsilon(1). CF(0) has three main subunits: a, b and c.

The protein localises to the mitochondrion. Its subcellular location is the mitochondrion inner membrane. In terms of biological role, mitochondrial membrane ATP synthase (F(1)F(0) ATP synthase or Complex V) produces ATP from ADP in the presence of a proton gradient across the membrane which is generated by electron transport complexes of the respiratory chain. F-type ATPases consist of two structural domains, F(1) - containing the extramembraneous catalytic core and F(0) - containing the membrane proton channel, linked together by a central stalk and a peripheral stalk. During catalysis, ATP synthesis in the catalytic domain of F(1) is coupled via a rotary mechanism of the central stalk subunits to proton translocation. Part of the complex F(0) domain and the peripheric stalk, which acts as a stator to hold the catalytic alpha(3)beta(3) subcomplex and subunit a/ATP6 static relative to the rotary elements. The protein is ATP synthase subunit 5, mitochondrial (atp-5) of Neurospora crassa (strain ATCC 24698 / 74-OR23-1A / CBS 708.71 / DSM 1257 / FGSC 987).